The primary structure comprises 735 residues: Glycogen [starch] synthase, muscle (735 aa).

A Phosphoserine; by AMPK and PKA modification is found at Ser-8. Ser-11 carries the phosphoserine modification. Lys-39 lines the UDP pocket. Residues His-205 and Arg-211 each contribute to the UDP-alpha-D-glucose site. Alpha-D-glucose 6-phosphate contacts are provided by His-291, Glu-292, Gln-294, His-297, and Lys-301. Arg-331 contributes to the UDP binding site. Arg-331 serves as a coordination point for UDP-alpha-D-glucose. Position 412 is a phosphoserine (Ser-412). His-501 lines the alpha-D-glucose 6-phosphate pocket. Glu-510, Trp-512, and Gly-513 together coordinate UDP-alpha-D-glucose. Thr-515 is a UDP binding site. Positions 582 and 586 each coordinate alpha-D-glucose 6-phosphate. The interval 629-735 is disordered; sequence DATQGYRYPR…PASSLGEERN (107 aa). Phosphoserine; by DYRK2, GSK3-alpha, GSK3-beta and PASK is present on Ser-641. A phosphoserine; by GSK3-alpha and GSK3-beta mark is found at Ser-645 and Ser-649. At Ser-652 the chain carries Phosphoserine. Residue Ser-653 is modified to Phosphoserine; by GSK3-alpha and GSK3-beta. Position 657 is a phosphoserine; by CK2 (Ser-657). Residues 658-681 are compositionally biased toward acidic residues; that stretch reads EDEEEPRDGLPEEDGERYDEDEEA. Basic and acidic residues predominate over residues 682-695; the sequence is AKDRRNIRAPEWPR. Position 698 is a phosphoserine (Ser-698). Residues 698–735 show a composition bias toward low complexity; sequence SCTSSSGGSKRSNSVDTSSLSTPSEPLSPASSLGEERN. Phosphothreonine is present on Thr-700. Ser-709 and Ser-711 each carry phosphoserine. At Thr-719 the chain carries Phosphothreonine. Ser-725 and Ser-729 each carry phosphoserine.

It belongs to the glycosyltransferase 3 family. Part of the GYS1-GYG1 complex, a heterooctamer composed of a tetramer of GYS1 and 2 dimers of GYG1, where each GYS1 protomer binds to one GYG1 subunit (via GYG1 C-terminus); the GYS1 tetramer may dissociate from GYG1 dimers to continue glycogen polymerization on its own. In terms of processing, phosphorylation at Ser-8 is required for modification of Ser-11 by casein kinase I. Phosphorylated at Ser-641 by PASK, leading to inactivation; phosphorylation by PASK is inhibited by glycogen. Dephosphorylation at Ser-641 and Ser-645 by PP1 activates the enzyme. Phosphorylation at Ser-8 by AMPK inactivates the enzyme activity. Phosphorylated at Ser-641 by DYRK2, leading to inactivation. Primed phosphorylation at Ser-657 (site 5) by CSNK2A1 and CSNK2A2 is required for inhibitory phosphorylation at Ser-641 (site 3a), Ser-645 (site 3b), Ser-649 (site 3c) and Ser-653 (site 4) by GSK3A and GSK3B.

It catalyses the reaction [(1-&gt;4)-alpha-D-glucosyl](n) + UDP-alpha-D-glucose = [(1-&gt;4)-alpha-D-glucosyl](n+1) + UDP + H(+). Its pathway is glycan biosynthesis; glycogen biosynthesis. Allosteric activation by glucose-6-phosphate. Phosphorylation reduces the activity towards UDP-glucose. When in the non-phosphorylated state, glycogen synthase does not require glucose-6-phosphate as an allosteric activator; when phosphorylated it does. Glycogen synthase participates in the glycogen biosynthetic process along with glycogenin and glycogen branching enzyme. Extends the primer composed of a few glucose units formed by glycogenin by adding new glucose units to it. In this context, glycogen synthase transfers the glycosyl residue from UDP-Glc to the non-reducing end of alpha-1,4-glucan. This chain is Glycogen [starch] synthase, muscle, found in Oryctolagus cuniculus (Rabbit).